The following is a 1159-amino-acid chain: ATP-dependent helicase/deoxyribonuclease subunit B (1159 aa).

The 401-residue stretch at 1–401 (MSIRFVYGRS…LLKNWSYESV (401 aa)) folds into the UvrD-like helicase ATP-binding domain. 8-15 (GRSGTGKS) serves as a coordination point for ATP. The UvrD-like helicase C-terminal domain occupies 279-582 (PYRFKGNLEL…NIGDIARIKG (304 aa)). [4Fe-4S] cluster is bound by residues C787, C1106, C1109, and C1115.

The protein belongs to the helicase family. AddB/RexB type 1 subfamily. Heterodimer of AddA and AddB. Mg(2+) serves as cofactor. The cofactor is [4Fe-4S] cluster.

Its function is as follows. The heterodimer acts as both an ATP-dependent DNA helicase and an ATP-dependent, dual-direction single-stranded exonuclease. Recognizes the chi site generating a DNA molecule suitable for the initiation of homologous recombination. The AddB subunit has 5' -&gt; 3' nuclease activity but not helicase activity. The chain is ATP-dependent helicase/deoxyribonuclease subunit B from Clostridium beijerinckii (strain ATCC 51743 / NCIMB 8052) (Clostridium acetobutylicum).